Here is a 139-residue protein sequence, read N- to C-terminus: Putative pre-16S rRNA nuclease (139 aa).

The protein belongs to the YqgF nuclease family.

Its subcellular location is the cytoplasm. Functionally, could be a nuclease involved in processing of the 5'-end of pre-16S rRNA. This chain is Putative pre-16S rRNA nuclease, found in Rippkaea orientalis (strain PCC 8801 / RF-1) (Cyanothece sp. (strain PCC 8801)).